The sequence spans 315 residues: GTP cyclohydrolase MptA 1 (315 aa).

This sequence belongs to the GTP cyclohydrolase IV family. In terms of assembly, homodimer. Requires Fe(2+) as cofactor.

It catalyses the reaction GTP + H2O = 7,8-dihydroneopterin 2',3'-cyclic phosphate + formate + diphosphate + H(+). Its pathway is cofactor biosynthesis; 5,6,7,8-tetrahydromethanopterin biosynthesis. In terms of biological role, converts GTP to 7,8-dihydro-D-neopterin 2',3'-cyclic phosphate, the first intermediate in the biosynthesis of coenzyme methanopterin. The polypeptide is GTP cyclohydrolase MptA 1 (Methanocella arvoryzae (strain DSM 22066 / NBRC 105507 / MRE50)).